Reading from the N-terminus, the 472-residue chain is 3-isopropylmalate dehydratase large subunit (472 aa).

[4Fe-4S] cluster-binding residues include Cys347, Cys407, and Cys410.

It belongs to the aconitase/IPM isomerase family. LeuC type 1 subfamily. Heterodimer of LeuC and LeuD. [4Fe-4S] cluster is required as a cofactor.

The enzyme catalyses (2R,3S)-3-isopropylmalate = (2S)-2-isopropylmalate. It functions in the pathway amino-acid biosynthesis; L-leucine biosynthesis; L-leucine from 3-methyl-2-oxobutanoate: step 2/4. Functionally, catalyzes the isomerization between 2-isopropylmalate and 3-isopropylmalate, via the formation of 2-isopropylmaleate. The sequence is that of 3-isopropylmalate dehydratase large subunit from Synechococcus sp. (strain WH7803).